The sequence spans 382 residues: Na(+)/H(+) antiporter NhaA 1 (382 aa).

11 helical membrane-spanning segments follow: residues 10 to 30, 45 to 65, 87 to 107, 116 to 136, 145 to 165, 170 to 190, 211 to 231, 252 to 272, 275 to 295, 326 to 346, and 353 to 373; these read EFSIPLISGVIVALVWANISP, FSFHFIVNDFFMVLFFGIAAA, LLATIGGVVGPVLVYVVLNAL, GWGIPTATDIALAWLVASLVF, FLLLLAIADDAIGLAIIALFY, LPAAPQWLVLVLSGMGAAALL, AGLFMAHLHPALALVFIVPFL, LASFEHEWKVMVDFGLFLFGL, AGVTFGSIGAATWLVLASLVI, LVGLIAGIGLTVALFVAGEAF, and GAAKMGALMSAGCAVLALAAG.

This sequence belongs to the NhaA Na(+)/H(+) (TC 2.A.33) antiporter family.

It localises to the cell inner membrane. The enzyme catalyses Na(+)(in) + 2 H(+)(out) = Na(+)(out) + 2 H(+)(in). Its function is as follows. Na(+)/H(+) antiporter that extrudes sodium in exchange for external protons. In Pelobacter propionicus (strain DSM 2379 / NBRC 103807 / OttBd1), this protein is Na(+)/H(+) antiporter NhaA 1.